The following is a 396-amino-acid chain: Putative nickel insertion protein (396 aa).

Belongs to the LarC family.

The protein is Putative nickel insertion protein of Methanosarcina barkeri (strain Fusaro / DSM 804).